Here is a 287-residue protein sequence, read N- to C-terminus: Elongation factor Ts (287 aa).

Residues 80–83 (TDFL) are involved in Mg(2+) ion dislocation from EF-Tu.

It belongs to the EF-Ts family.

It localises to the cytoplasm. In terms of biological role, associates with the EF-Tu.GDP complex and induces the exchange of GDP to GTP. It remains bound to the aminoacyl-tRNA.EF-Tu.GTP complex up to the GTP hydrolysis stage on the ribosome. The polypeptide is Elongation factor Ts (Pseudomonas entomophila (strain L48)).